We begin with the raw amino-acid sequence, 512 residues long: MARAVHRSGLVALGIATALMASCAFAAKDVVVAVGSNFTTLDPYDANDTLSQAVAKSFYQGLFGLDKEMKLKNVLAESYTVSDDGITYTVKLREGIKFQDGTDFNAAAVKANLDRASDPANHLKRYNLYKNIAKTEAIDPTTVKITLKQPFSAFINILAHPATAMISPAALEKYGKEIGFHPVGTGPYELDTWNQTDFVKVKKFAGYWQPGLPKLDSITWRPVADNNTRAAMLQTGEAQFAFPIPYEQAALLEKNKNIELMASPSIMQRYISMNVTQKPFDNPKVREALNYAINRPALVKVAFAGYATPATGVVPPSIAYAQSYKPWPYDPVKARELLKEAGYPNGFSTTLWSSHNHSTAQKVLQFTQQQLAQVGIKAQVTAMDAGQRAAEVEGKGQKESGVRMFYTGWSASTGEADWALSPLFASQNWPPTLFNTAFYSNKQVDDFLAQALKTNDPAEKTRLYKAAQDIIWQESPWIPLVVEKLVSAHSKNLTGFWIMPDTGFSFEDADLQ.

Residues 1–26 form the signal peptide; sequence MARAVHRSGLVALGIATALMASCAFA.

It belongs to the bacterial solute-binding protein 5 family. The complex is composed of two ATP-binding proteins (GsiA), two transmembrane proteins (GsiC and GsiD) and a solute-binding protein (GsiB).

Its subcellular location is the periplasm. Part of the ABC transporter complex GsiABCD involved in glutathione import. Binds glutathione. The protein is Glutathione-binding protein GsiB of Escherichia coli O157:H7.